Reading from the N-terminus, the 97-residue chain is Large ribosomal subunit protein bL21 (97 aa).

This sequence belongs to the bacterial ribosomal protein bL21 family. In terms of assembly, part of the 50S ribosomal subunit. Contacts protein L20.

Its function is as follows. This protein binds to 23S rRNA in the presence of protein L20. The sequence is that of Large ribosomal subunit protein bL21 from Persephonella marina (strain DSM 14350 / EX-H1).